A 119-amino-acid polypeptide reads, in one-letter code: MARVKRGVQAHARHKKVLKAAKGYYSARRKTFRVAKQAVIKAGQYAYRDRKTKKRQFRQLWIIRINAGARIHGLSYSRFINGLKKSGIAVDRKILSELAVYDKSVFATLAEKAKAALSA.

This sequence belongs to the bacterial ribosomal protein bL20 family.

In terms of biological role, binds directly to 23S ribosomal RNA and is necessary for the in vitro assembly process of the 50S ribosomal subunit. It is not involved in the protein synthesizing functions of that subunit. The polypeptide is Large ribosomal subunit protein bL20 (Dichelobacter nodosus (strain VCS1703A)).